Reading from the N-terminus, the 227-residue chain is Cytidylate kinase (227 aa).

12–20 (GPSGAGKGT) provides a ligand contact to ATP.

This sequence belongs to the cytidylate kinase family. Type 1 subfamily.

The protein resides in the cytoplasm. It carries out the reaction CMP + ATP = CDP + ADP. The enzyme catalyses dCMP + ATP = dCDP + ADP. In Salmonella paratyphi B (strain ATCC BAA-1250 / SPB7), this protein is Cytidylate kinase.